The following is a 219-amino-acid chain: Steroid receptor RNA activator 1 (219 aa).

2 disordered regions span residues 1–90 and 192–219; these read MAEL…SSPV and SLSS…QPSS. The segment covering 23 to 32 has biased composition (polar residues); sequence YGLQTQTGGT. Position 48 is a phosphoserine (Ser-48). A compositionally biased stretch (pro residues) spans 55–76; it reads SGPPPVDHPPPSSKASRPPPMG. Basic and acidic residues predominate over residues 192-203; it reads SLSSEENKEEKS. The span at 206-219 shows a compositional bias: polar residues; sequence APENQTIPGFQPSS.

The protein belongs to the SRA1 family. SRA1 RNA exists in a ribonucleoprotein complex containing NCOA1. The RNA also forms a complex with PUS1 and RARG in the nucleus. Interacts with AR. As to expression, expressed in various prostate cancer cell lines.

It localises to the nucleus. The protein resides in the cytoplasm. Its function is as follows. Functional RNA which acts as a transcriptional coactivator that selectively enhances steroid receptor-mediated transactivation ligand-independently through a mechanism involving the modulating N-terminal domain (AF-1) of steroid receptors. Also mediates transcriptional coactivation of steroid receptors ligand-dependently through the steroid-binding domain (AF-2). Enhances cellular proliferation and differentiation and promotes apoptosis in vivo. May play a role in tumorigenesis. The polypeptide is Steroid receptor RNA activator 1 (Rattus norvegicus (Rat)).